Reading from the N-terminus, the 159-residue chain is MDHNQYLLTMFFADDDSFFKYLASQDDESSLSDILQITQYLDFLLLLLIQSKNKLEAVGHCYESLSEEYRQLTKFTDSQDFKKLFNKVPIVTDGRVKLNKGYLFDFVISLMRFKKESALATTAIDPVRYIDPRRDIAFSNVMDILKSNKAKNNYSLLSS.

It belongs to the orthopoxvirus OPG100 family. Homodimer. Part of a complex composed of the kinase OPG054, OPG092, OPG114, OPG115, OPG142 and OPG157. Interacts with OPG175.

It is found in the virion. It localises to the host cytoplasm. In terms of biological role, late protein which is a part of a large complex required for early virion morphogenesis. This complex participates in the formation of virosomes and the incorporation of virosomal contents into nascent immature virions. Plays a role in DNA packaging during immature virions (IV) formation. The protein is Virion assembly protein OPG100 (OPG100) of Homo sapiens (Human).